Consider the following 381-residue polypeptide: Lipopolysaccharide 1,2-N-acetylglucosaminetransferase (381 aa).

Belongs to the glycosyltransferase group 1 family. Glycosyltransferase 4 subfamily.

It localises to the cell inner membrane. It carries out the reaction UDP-N-acetyl-alpha-D-glucosamine + [lipopolysaccharide] = UDP + N-acetyl-alpha-D-glucosaminyl-[lipopolysaccharide].. Its pathway is bacterial outer membrane biogenesis; LPS core biosynthesis. In terms of biological role, transferase involved in the biosynthesis of the core oligosaccharide region of lipopolysaccharide (LPS). Catalyzes the addition of the terminal N-acetyl-D-glucosamine (GlcNAc) group to the outer-core glucose II, the last step of the lipid A-core oligosaccharide biosynthesis. The polypeptide is Lipopolysaccharide 1,2-N-acetylglucosaminetransferase (Salmonella typhimurium (strain LT2 / SGSC1412 / ATCC 700720)).